The following is a 246-amino-acid chain: Osmotin-like protein OSML13 (246 aa).

An N-terminal signal peptide occupies residues 1–21; the sequence is MAYLRSSFVFFLLAFVTYTYA. Disulfide bonds link cysteine 30/cysteine 225, cysteine 72/cysteine 82, cysteine 87/cysteine 93, cysteine 141/cysteine 213, cysteine 146/cysteine 196, cysteine 154/cysteine 164, cysteine 168/cysteine 177, and cysteine 178/cysteine 183.

Belongs to the thaumatin family.

In Solanum commersonii (Commerson's wild potato), this protein is Osmotin-like protein OSML13.